Here is a 795-residue protein sequence, read N- to C-terminus: Protein Jade-3 (795 aa).

A compositionally biased stretch (low complexity) spans 1 to 25 (MKRLRTPSSSDSSDNESPSTSFSSN). The disordered stretch occupies residues 1–41 (MKRLRTPSSSDSSDNESPSTSFSSNKYGSKPGTPASAQKKP). Residues 201–251 (DVICDVCRSPDSEEGNDMVFCDKCNICVHQACYGIVKVPDGNWLCRTCVLG) form a PHD-type 1 zinc finger. The C2HC pre-PHD-type zinc finger occupies 253–287 (TPQCLLCPKTGGAMKATRAGTKWAHVSCALWIPEV). The PHD-type 2 zinc finger occupies 311 to 367 (LICSLCKLKTGACIQCSVKNCTIPFHVTCAFEHSLEMKTILDEGDEVKFKSYCLKHS). 3 disordered regions span residues 630–654 (HGQS…NGIL), 667–687 (AASE…SGFH), and 714–795 (FEKN…SVQR). Polar residues-rich tracts occupy residues 678–687 (SGKSQSSGFH) and 720–732 (KSSG…STER).

The protein belongs to the JADE family. As to quaternary structure, component of the HBO1 complex.

Functionally, scaffold subunit of some HBO1 complexes, which have a histone H4 acetyltransferase activity. This chain is Protein Jade-3 (jade3), found in Danio rerio (Zebrafish).